The chain runs to 1234 residues: MTQFTTSQQAAITHDGHDVLVSASAGSGKTTVLVERIIQKILKQHADITRMLIVTFTRAATAEMRTKIQTALKKALTERRHELSGEDRRHLANQIAMVNAAKISTLDAFSLQIVQTYYYVIDLDPGFRLLTDETERYMLQERVWDDLREQLYASDEAPAFEQLTANFSGDRDDSGLQDLMFELIRQAGATTDPKAYLEGLATPYAPEKWEATFSQQIWPRVKGQLLQIATSLTQASALANQLPNPIWYQQIQADLAPLQTLLETNAPTYDTVRSVLISHEFAAWSRISKGLDDADKDTKNAAKDLRDAAKKTWQNKLAPTFALAAEQIGDLLREAQPLVATLANVALKFEDALTAEKAARHVQDYSDIAHNALRILQQKDPQTGAPIADNYRASFDEVMVDEYQDISPLQEALLAAVSTTTPGDRFMVGDVKQSIYGFRLADPQLFIHKYQTFQDAPTDPAAPERIILAENFRSTKNVLAFTNLIFSQIMDPEVGDLSYDNAAALRYGALDYGDAHPAVKVLLYSKATSDEDSSDASELPGDADDNEPVDIATGQTQLVLAEIQRLINDPDAQLWDRQAQEYRRIHYRDITLLTRQTSQNSLIQTQFAAAGVPLFVADTKNFFKTTELMVMLALLKVIDNQKQDIPLVAVLRSPIVGLSADQLALIRLAAKQVPYYDAVTAFLQAEPKTPLAQRTHDMLTHFFNQLSHFRDLARENDLVTLLWAIYQDTGFLDYVGGTPGGSQRQANLQALIDRARTYEAGGFKGLFAFIHFITLMQKQDQDLAMPAQVDPDNDAVKLMTIHKSKGLEFPVVFLMQANKHFNMRDQTGTAILTKQGIGIKWLDPETRVEYELPQYQAAKAARQNQTLAEEMRLLYVALTRAQQRLYVVGATMSGNQLTSADKTVEKWAAAAEGEARVLAPQVRSGATSYLDWIGPALIRHPQARGLAETTIKPALVGDETEFTIEIDVNPQVTPTATPEKVSDDSGTMVDLSAWFKKAYPFQAATTTTGFQSVSEIKRAFDDPDTIDLVNADRFLGPKPPMRDLTAPAFLTETPSGISPAAIGTATHLLLQLVDLAKPITMASLRALRDQLTTKQVIAVDVAKHIDLTALIRFFETDLGRLLLAKPQQVHREVPFSMLLPADQVFEALADDPGEDVLIHGIIDGYVSDEQGVTLFDYKTDHNPNTAVLVDRYRGQLNLYAQALQDLQPKPVLHRYLVFLRTGTVVDLVASGAGK.

The UvrD-like helicase ATP-binding domain occupies 2–475; the sequence is TQFTTSQQAA…IILAENFRST (474 aa). 23-30 lines the ATP pocket; it reads ASAGSGKT. The region spanning 507–806 is the UvrD-like helicase C-terminal domain; sequence YGALDYGDAH…KLMTIHKSKG (300 aa).

The protein belongs to the helicase family. AddA subfamily. Heterodimer of AddA and AddB/RexB. Mg(2+) is required as a cofactor.

The catalysed reaction is Couples ATP hydrolysis with the unwinding of duplex DNA by translocating in the 3'-5' direction.. It carries out the reaction ATP + H2O = ADP + phosphate + H(+). Functionally, the heterodimer acts as both an ATP-dependent DNA helicase and an ATP-dependent, dual-direction single-stranded exonuclease. Recognizes the chi site generating a DNA molecule suitable for the initiation of homologous recombination. The AddA nuclease domain is required for chi fragment generation; this subunit has the helicase and 3' -&gt; 5' nuclease activities. This Lacticaseibacillus casei (strain BL23) (Lactobacillus casei) protein is ATP-dependent helicase/nuclease subunit A.